A 143-amino-acid chain; its full sequence is ATP synthase subunit b', chloroplastic (143 aa).

A helical transmembrane segment spans residues 12-31 (LPVMGLQVVLLSWLLEQILY).

The protein belongs to the ATPase B chain family. F-type ATPases have 2 components, F(1) - the catalytic core - and F(0) - the membrane proton channel. F(1) has five subunits: alpha(3), beta(3), gamma(1), delta(1), epsilon(1). F(0) has four main subunits: a(1), b(1), b'(1) and c(10-14). The alpha and beta chains form an alternating ring which encloses part of the gamma chain. F(1) is attached to F(0) by a central stalk formed by the gamma and epsilon chains, while a peripheral stalk is formed by the delta, b and b' chains.

It is found in the plastid. The protein resides in the chloroplast thylakoid membrane. F(1)F(0) ATP synthase produces ATP from ADP in the presence of a proton or sodium gradient. F-type ATPases consist of two structural domains, F(1) containing the extramembraneous catalytic core and F(0) containing the membrane proton channel, linked together by a central stalk and a peripheral stalk. During catalysis, ATP synthesis in the catalytic domain of F(1) is coupled via a rotary mechanism of the central stalk subunits to proton translocation. Functionally, component of the F(0) channel, it forms part of the peripheral stalk, linking F(1) to F(0). The b'-subunit is a diverged and duplicated form of b found in plants and photosynthetic bacteria. The chain is ATP synthase subunit b', chloroplastic from Cyanidioschyzon merolae (strain NIES-3377 / 10D) (Unicellular red alga).